The primary structure comprises 99 residues: Large ribosomal subunit protein bL21 (99 aa).

The protein belongs to the bacterial ribosomal protein bL21 family. Part of the 50S ribosomal subunit. Contacts protein L20.

In terms of biological role, this protein binds to 23S rRNA in the presence of protein L20. In Deinococcus geothermalis (strain DSM 11300 / CIP 105573 / AG-3a), this protein is Large ribosomal subunit protein bL21.